The following is a 130-amino-acid chain: Ribosome-binding factor A (130 aa).

It belongs to the RbfA family. As to quaternary structure, monomer. Binds 30S ribosomal subunits, but not 50S ribosomal subunits or 70S ribosomes.

The protein localises to the cytoplasm. Its function is as follows. One of several proteins that assist in the late maturation steps of the functional core of the 30S ribosomal subunit. Associates with free 30S ribosomal subunits (but not with 30S subunits that are part of 70S ribosomes or polysomes). Required for efficient processing of 16S rRNA. May interact with the 5'-terminal helix region of 16S rRNA. The protein is Ribosome-binding factor A of Prochlorococcus marinus (strain SARG / CCMP1375 / SS120).